Consider the following 490-residue polypeptide: Tegument protein VP16 (490 aa).

The disordered stretch occupies residues 12–35 (MNADGASPPPPRPAGGPKNTPAAP). Phosphoserine occurs at positions 18, 353, 411, and 452. The segment at 411–490 (STAPPTDVSL…DALGIDEYGG (80 aa)) is transcriptional activation.

It belongs to the herpesviridae tegument protein VP16 protein family. As to quaternary structure, interacts with tegument protein VP22. Interacts with gH (via C-terminus). Interacts with the virion host shutoff protein (vhs). Interacts with VP11/12. Associates with the VP16-induced complex; binding to host HCFC1 activates VP16 for association with the octamer motif-binding host protein POU2F1, to form a multiprotein-DNA complex responsible for activating transcription of the viral immediate early genes. Interacts with host P-TEFb; this interaction recruits P-TEFb to the viral alpha-gene promoters and overcomes transcriptional inhibition by ICP22 and promotes transcription of IE genes.

Its subcellular location is the virion tegument. The protein localises to the host nucleus. Its function is as follows. In the early stage of viral replication, acts as a transcriptional activator of immediate-early (IE) gene products (alpha-genes), which is released by invading virions. Recruits P-TEFb to the viral alpha-gene promoters and overcomes transcriptional inhibition by ICP22 to promote transcription of IE genes. VP16-induced complex represents a regulatory switch: when it is on, it promotes IE-gene expression and thus lytic infection, and when it is off, it limits IE-gene transcription favoring latent infection. Acts as a key activator of lytic infection by initiating the lytic program through the assembly of the transcriptional regulatory VP16-induced complex composed of VP16 and two cellular factors, HCFC1 and POU2F1. This complex recognizes the core motif 'TAATGARAT' in alpha-gene promoters. In the late stage of viral replication, VP16, as a tegument, is involved in viral assembly. Functionally, may play a role in the aggregation of tegument proteins around nucleocapsids during virus morphogenesis. This is Tegument protein VP16 from Human herpesvirus 1 (strain 17) (HHV-1).